Reading from the N-terminus, the 94-residue chain is Cell division topological specificity factor (94 aa).

Belongs to the MinE family.

Prevents the cell division inhibition by proteins MinC and MinD at internal division sites while permitting inhibition at polar sites. This ensures cell division at the proper site by restricting the formation of a division septum at the midpoint of the long axis of the cell. The polypeptide is Cell division topological specificity factor (Alkalilimnicola ehrlichii (strain ATCC BAA-1101 / DSM 17681 / MLHE-1)).